The following is a 446-amino-acid chain: Serum factor response D (446 aa).

An MADS-box domain is found at 1–61; it reads MGRKKIKIQR…PNAKEKYFQY (61 aa). 3 disordered regions span residues 95 to 195, 210 to 296, and 319 to 432; these read KKEK…FNSS, TQEN…CQQV, and CSSP…SNLN. Basic and acidic residues predominate over residues 112–121; the sequence is SHSEEEDHKS. The segment covering 133-142 has biased composition (basic residues); that stretch reads HHNHHHHHHQ. Low complexity-rich tracts occupy residues 143-195 and 216-282; these read YNNN…FNSS and HYNN…NNNN. Polar residues predominate over residues 322-355; that stretch reads PEDTSPMTSPRTPPFSSTNTNTLQTSPNSQQKSK. Over residues 365–432 the composition is skewed to low complexity; sequence NNNQNNNNQN…SPTSSSSNLN (68 aa).

The protein localises to the nucleus. This Dictyostelium discoideum (Social amoeba) protein is Serum factor response D (srfD).